Reading from the N-terminus, the 838-residue chain is Envelope glycoprotein H (838 aa).

The N-terminal stretch at 1-18 is a signal peptide; it reads MGPGLWVVMGVLVGVAGG. Over 21–803 the chain is Virion surface; the sequence is TYWTEQIDPW…DTLPIATIAP (783 aa). Asparagine 73 and asparagine 120 each carry an N-linked (GlcNAc...) asparagine; by host glycan. Residues 171 to 190 show a composition bias toward basic and acidic residues; sequence GLTFPRGDDGATERHPDGRR. Residues 171 to 207 are disordered; sequence GLTFPRGDDGATERHPDGRRNAPPPGPPAGTPRHPTT. N-linked (GlcNAc...) asparagine; by host glycosylation is found at asparagine 208 and asparagine 216. A disulfide bridge connects residues cysteine 258 and cysteine 429. Residues 259 to 323 form an interaction with gL region; the sequence is DAALVRARYG…PAGPRYRVFV (65 aa). N-linked (GlcNAc...) asparagine; by host glycosylation is found at asparagine 332, asparagine 437, asparagine 670, and asparagine 784. Residues 804 to 824 traverse the membrane as a helical segment; sequence GFLAASALGVVMITAALAGIL. Residues 825–838 lie on the Intravirion side of the membrane; sequence RVVRTCVPFLWRRE.

The protein belongs to the herpesviridae glycoprotein H family. As to quaternary structure, interacts with glycoprotein L (gL); this interaction is necessary for the correct processing and cell surface expression of gH. The heterodimer gH/gL seems to interact with gB trimers during fusion. Interacts with host integrins ITGAV/ITGB3 to mediate viral entry into epithelial cells. Post-translationally, N-glycosylated, O-glycosylated, and sialylated.

The protein localises to the virion membrane. The protein resides in the host cell membrane. It is found in the host endosome membrane. Its function is as follows. The heterodimer glycoprotein H-glycoprotein L is required for the fusion of viral and plasma membranes leading to virus entry into the host cell. Following initial binding to host receptor, membrane fusion is mediated by the fusion machinery composed of gB and the heterodimer gH/gL. May also be involved in the fusion between the virion envelope and the outer nuclear membrane during virion morphogenesis. Interaction with host integrins ITGAV/ITGB3 triggers release of cytosolic Ca(2+) and FAK phosphorylation leading to efficient viral entry into host genital tract epithelial cells. In Human herpesvirus 2 (strain HG52) (HHV-2), this protein is Envelope glycoprotein H.